The primary structure comprises 735 residues: MFDQLEFYPAVNYEDNETQNDIKLPEVAKLENIETVHSISKERRDSLTEILNDSSSLPARPFSLPNPNNSTVEKQSLFPFEEKMNPIWIISRPTFSIEQDAEKKINELQTFTNIIDQILGQTNNIESTLLSMKEKFESSEKKLSEFSEMCENLSTDEMRFSEIADGIRKGLTIFAPLKELTRVFRHPPPDFAGKVSFKEHITQLNTCIMFLEENLDFQESPHYLGQYKKLLSQAMDIFKPYFIRIIKQTTDQVLKDSKKMDVHKQLHSSLFYARFSAVGHNLCPTITELCKLCSKESLDAFLPAFYDVYFQCRTRLLKPVLDYHLKSFFMEKSISSYIQKSLALLQLTFFDENKLFREILIMDDFRFMHYWNNLCQSFFENSRSLILHEKNLTELCEVCSYIQSFQNAILEGEREDVDKKVVEFLNPLVLELQERLLFVVQTAIETDIQRYSPTEEDLNPIADDKSLLFDLEKLRLNNDEEKLDPDVPQKLAMAQGWYPVVQKSLIILSKIYRLVNSQVFDEIALELVHSCIRSLVDAYRYFSRNNDKQLARLFLIKNFLVLKDQLNSFDIHYACIEAGVDLRKVWDSVREWRSNLRGVLQLVYETFPKFITNAVDTRQELNQQLRVAVNGYIETAVIHYTECLSIGNLESITEFQNRIQKFPELRQQISLYLSETWIIELFLQAIREEVVSKFQNFYESIVANEDITGSDHNKSGTTSLKHLNEYVEDIYSVMS.

Belongs to the COG3 family. In terms of assembly, component of the conserved oligomeric Golgi (COG or Sec34/Sec35) complex which consists of eight different proteins cog1-cog8.

Its subcellular location is the golgi apparatus membrane. In terms of biological role, acts as a component of the peripheral membrane COG complex that is involved in intra-Golgi protein trafficking. COG is located at the cis- Golgi, and regulates tethering of retrograde intra-Golgi vesicles and possibly a number of other membrane trafficking events. The chain is Conserved oligomeric Golgi complex subunit 3 (cog3) from Schizosaccharomyces pombe (strain 972 / ATCC 24843) (Fission yeast).